Reading from the N-terminus, the 148-residue chain is Large ribosomal subunit protein bL27m (148 aa).

Residues 1 to 30 (MALAVLAWRTRTAVIALLSPPQAAALAVRY) constitute a mitochondrion transit peptide.

This sequence belongs to the bacterial ribosomal protein bL27 family. In terms of assembly, component of the mitochondrial ribosome large subunit (39S) which comprises a 16S rRNA and about 50 distinct proteins.

It is found in the mitochondrion. The chain is Large ribosomal subunit protein bL27m (MRPL27) from Bos taurus (Bovine).